Reading from the N-terminus, the 154-residue chain is uncharacterized protein (154 aa).

The region spanning 13–128 (SKGVLLLRTL…VFTFVAVDNN (116 aa)) is the HotDog ACOT-type domain.

Belongs to the acyl coenzyme A hydrolase family.

This is an uncharacterized protein from Haemophilus influenzae (strain ATCC 51907 / DSM 11121 / KW20 / Rd).